A 159-amino-acid polypeptide reads, in one-letter code: Phosphopantetheine adenylyltransferase (159 aa).

Residue S9 coordinates substrate. Residues S9–F10 and H17 contribute to the ATP site. Substrate is bound by residues K41, L73, and K87. ATP contacts are provided by residues G88–R90, E98, and Y122–S128.

The protein belongs to the bacterial CoaD family. In terms of assembly, homohexamer. Requires Mg(2+) as cofactor.

The protein localises to the cytoplasm. It catalyses the reaction (R)-4'-phosphopantetheine + ATP + H(+) = 3'-dephospho-CoA + diphosphate. Its pathway is cofactor biosynthesis; coenzyme A biosynthesis; CoA from (R)-pantothenate: step 4/5. In terms of biological role, reversibly transfers an adenylyl group from ATP to 4'-phosphopantetheine, yielding dephospho-CoA (dPCoA) and pyrophosphate. This Streptomyces griseus subsp. griseus (strain JCM 4626 / CBS 651.72 / NBRC 13350 / KCC S-0626 / ISP 5235) protein is Phosphopantetheine adenylyltransferase.